Consider the following 226-residue polypeptide: Chalcone--flavanone isomerase 1 (226 aa).

Substrate is bound by residues Thr52, Asn117, and Thr194.

This sequence belongs to the chalcone isomerase family.

The enzyme catalyses a chalcone = a flavanone.. It participates in secondary metabolite biosynthesis; flavonoid biosynthesis. Catalyzes the intramolecular cyclization of bicyclic chalcones into tricyclic (S)-flavanones. Responsible for the isomerization of 4,2',4',6'-tetrahydroxychalcone (also termed chalcone) into naringenin. This Lotus japonicus (Lotus corniculatus var. japonicus) protein is Chalcone--flavanone isomerase 1 (CHI1).